The sequence spans 108 residues: uncharacterized protein (108 aa).

An N-terminal signal peptide occupies residues 1 to 16 (MKKLILIAIMASGLVA). A lipid anchor (N-palmitoyl cysteine) is attached at Cys17. Cys17 is lipidated: S-diacylglycerol cysteine.

It localises to the cell membrane. This is an uncharacterized protein from Escherichia coli (strain K12).